A 441-amino-acid polypeptide reads, in one-letter code: CBL-interacting serine/threonine-protein kinase 3 (441 aa).

The 256-residue stretch at 14-269 folds into the Protein kinase domain; the sequence is YEVGRTIGEG…PQEVFEDEWF (256 aa). Residues 20-28 and Lys-43 contribute to the ATP site; that span reads IGEGTFAKV. The active-site Proton acceptor is Asp-137. The segment at 155–184 is activation loop; the sequence is DFGLSALSQQVRDDGLLHTSCGTPNYVAPE. The 25-residue stretch at 307–331 folds into the NAF domain; it reads EQPAAINAFEIISMSRGLNLENLFD. The segment at 337 to 366 is PPI; sequence KRETRITLRGGANEIIEKIEEAAKPLGFDV.

The protein belongs to the protein kinase superfamily. CAMK Ser/Thr protein kinase family. SNF1 subfamily. In terms of assembly, interacts with CBL3 and CBL9. Mn(2+) is required as a cofactor. Mostly expressed in germinating seeds and young seedlings. Detected at low levels in roots, stems, leaves and flowers.

It catalyses the reaction L-seryl-[protein] + ATP = O-phospho-L-seryl-[protein] + ADP + H(+). The catalysed reaction is L-threonyl-[protein] + ATP = O-phospho-L-threonyl-[protein] + ADP + H(+). Functionally, involved in the resistance to some abiotic stresses (e.g. high salt, hyperosmotic stress) in young seedlings, by regulating the expression of several stress-inducible genes (cold- and salt-induced genes but not drought-responsive genes). Required for the ABA response during germination. CIPK serine-threonine protein kinases interact with CBL proteins. Binding of a CBL protein to the regulatory NAF domain of CIPK protein lead to the activation of the kinase in a calcium-dependent manner. The CBL9/CIPK3 complex acts in the regulation of abscisic acid response in seed germination. This is CBL-interacting serine/threonine-protein kinase 3 (CIPK3) from Arabidopsis thaliana (Mouse-ear cress).